The chain runs to 192 residues: Glycerol-3-phosphate acyltransferase (192 aa).

The next 5 helical transmembrane spans lie at 1-21, 49-69, 80-100, 110-130, and 143-163; these read MFIA…AYIL, GLAG…IYSL, ELCI…WLKF, IGVI…SWLF, and IVSI…VVAL.

It belongs to the PlsY family. As to quaternary structure, probably interacts with PlsX.

It localises to the cell inner membrane. The catalysed reaction is an acyl phosphate + sn-glycerol 3-phosphate = a 1-acyl-sn-glycero-3-phosphate + phosphate. The protein operates within lipid metabolism; phospholipid metabolism. Functionally, catalyzes the transfer of an acyl group from acyl-phosphate (acyl-PO(4)) to glycerol-3-phosphate (G3P) to form lysophosphatidic acid (LPA). This enzyme utilizes acyl-phosphate as fatty acyl donor, but not acyl-CoA or acyl-ACP. This chain is Glycerol-3-phosphate acyltransferase, found in Anaplasma phagocytophilum (strain HZ).